The primary structure comprises 132 residues: MKGISGRETRGLPLGALIPCVDNTGAKMISLIDVKALHTVAKRIPAAGVGDMFIASVKKGTPEMRSKVVYAVVVRQRRPYRRADGTMIEFEDNAAVLVTPDGEVRGSEIKGPVAREAAERWPRIAAISSTIV.

This sequence belongs to the universal ribosomal protein uL14 family. In terms of assembly, part of the 50S ribosomal subunit. Forms a cluster with proteins L3 and L24e, part of which may contact the 16S rRNA in 2 intersubunit bridges.

In terms of biological role, binds to 23S rRNA. Forms part of two intersubunit bridges in the 70S ribosome. The sequence is that of Large ribosomal subunit protein uL14 from Picrophilus torridus (strain ATCC 700027 / DSM 9790 / JCM 10055 / NBRC 100828 / KAW 2/3).